The chain runs to 104 residues: MVELDGKFATKADLKRVEDKVDVLFELQKTQGEQIKVQGKQIEQLTETVQKQGEQIKELQVQVKAQGEEIKEIKVEQKAQGQTLQLILKALEGINKRLDNLESK.

This sequence belongs to the UPF0134 family.

The polypeptide is UPF0134 protein MPN_104 (Mycoplasma pneumoniae (strain ATCC 29342 / M129 / Subtype 1) (Mycoplasmoides pneumoniae)).